The following is a 2492-amino-acid chain: Transcriptional regulator ATRX (2492 aa).

The tract at residues 1-146 is disordered; the sequence is MTAEPMSESK…DKDDFKGPEF (146 aa). Lysine 10 is covalently cross-linked (Glycyl lysine isopeptide (Lys-Gly) (interchain with G-Cter in SUMO2)). Positions 17–27 are enriched in basic and acidic residues; it reads KLHDFLAHSSE. A phosphoserine mark is found at serine 25 and serine 34. Positions 40 to 57 are enriched in polar residues; that stretch reads MNQNTDKISGSGSNSDMM. Residues 58–72 show a composition bias toward basic and acidic residues; it reads ENSKEEGTSSSEKSK. Tyrosine 89 bears the Phosphotyrosine mark. Serine 92 and serine 112 each carry phosphoserine. Over residues 92–108 the composition is skewed to acidic residues; it reads SDDEKPLDDETVNEDAS. Basic and acidic residues predominate over residues 135–146; the sequence is NEDKDDFKGPEF. Glycyl lysine isopeptide (Lys-Gly) (interchain with G-Cter in SUMO2) cross-links involve residues lysine 138 and lysine 142. Positions 159–296 constitute an ADD domain; sequence KRGEDGLHGI…LEQLLQQNKK (138 aa). The GATA-type; atypical zinc finger occupies 170–206; sequence SCTACGQQVNHFQKDSIYRHPSLQVLICKNCFKYYMS. A Phosphoserine modification is found at serine 213. The PHD-type; atypical zinc finger occupies 217-272; the sequence is DEQCRWCAEGGNLICCDFCHNAFCKKCILRNLGRKELSTIMDENNQWYCYICHPEP. Lysine 299 is covalently cross-linked (Glycyl lysine isopeptide (Lys-Gly) (interchain with G-Cter in SUMO2)). Serine 316 carries the phosphoserine modification. Residue lysine 438 forms a Glycyl lysine isopeptide (Lys-Gly) (interchain with G-Cter in SUMO2) linkage. 2 stretches are compositionally biased toward basic and acidic residues: residues 457–473 and 481–502; these read ISKSEAKLSRKQVDSEH and EEQRANKSTGGEHKKSDRKEEP. Residues 457–581 are disordered; that stretch reads ISKSEAKLSR…GGIKSKTTAK (125 aa). Residues 557–567 show a composition bias toward low complexity; the sequence is ESSSVKLSISS. The PxVxL motif signature appears at 581–594; that stretch reads KVTKELYVKLTPVS. Threonine 591 bears the Phosphothreonine mark. The tract at residues 593 to 619 is disordered; that stretch reads VSLSNSPIKGADCQEVPQDKDGYKSCG. A phosphoserine mark is found at serine 594 and serine 598. A Glycyl lysine isopeptide (Lys-Gly) (interchain with G-Cter in SUMO1); alternate cross-link involves residue lysine 623. A Glycyl lysine isopeptide (Lys-Gly) (interchain with G-Cter in SUMO2); alternate cross-link involves residue lysine 623. Serine 634 carries the phosphoserine modification. A disordered region spans residues 652-949; it reads DLRRSPRVKT…AETKEKSKHL (298 aa). Threonine 674 carries the phosphothreonine modification. Serine 675, serine 677, serine 729, and serine 731 each carry phosphoserine. The segment covering 755 to 777 has biased composition (basic and acidic residues); the sequence is NEIHTNHKTLYDLKTQAGKDDKG. Serine 784, serine 819, serine 849, serine 850, serine 875, and serine 876 each carry phosphoserine. Over residues 843-864 the composition is skewed to basic and acidic residues; it reads NTKDFDSSEDEKHSKKGMDNQG. Positions 878-887 are enriched in basic and acidic residues; sequence DAERKQEREN. Residue serine 889 is modified to Phosphoserine. Composition is skewed to basic and acidic residues over residues 894-909 and 920-944; these read TVDKDTTIMELRDRLP and GVDKLSGKEEGFTSLEVRKVAETKE. Residue serine 962 is modified to Phosphoserine. At lysine 967 the chain carries N6-acetyllysine. Basic and acidic residues predominate over residues 967–1004; that stretch reads KFLKKDQSDETSEDDKKQSKKGTEEKKKTSDFKKKVIK. Residues 967–1479 are disordered; that stretch reads KFLKKDQSDE…SKSPGKGRKK (513 aa). Serine 974 carries the post-translational modification Phosphoserine. Position 977 is a phosphothreonine (threonine 977). Lysine 1004 participates in a covalent cross-link: Glycyl lysine isopeptide (Lys-Gly) (interchain with G-Cter in SUMO2). Residues serine 1011, serine 1012, and serine 1013 each carry the phosphoserine modification. Residues 1015 to 1027 are compositionally biased toward basic and acidic residues; that stretch reads GTEKLPEREEICH. A compositionally biased stretch (basic residues) spans 1045 to 1055; sequence KNKKIRDKTSK. Basic and acidic residues-rich tracts occupy residues 1056–1082 and 1103–1139; these read KKDELSDYAEKSTGKGDSCDSSEDKKS and KRQDCSSSDTEKYSMKEDGCNSSDKRLKRIELRERRN. Position 1061 is a phosphoserine (serine 1061). At tyrosine 1063 the chain carries Phosphotyrosine. Basic residues predominate over residues 1167-1195; sequence KKKQRTSSKKKAVIVKEKKRNSLRTSTKR. Residues 1189-1326 are interaction with DAXX; that stretch reads LRTSTKRKQA…KNQVNSESDS (138 aa). Polar residues predominate over residues 1233-1246; it reads LVLSSHTGFCQSSG. Serine 1244, serine 1245, and serine 1253 each carry phosphoserine. The segment covering 1267 to 1281 has biased composition (basic and acidic residues); the sequence is PENRIAKKMLLEEIK. Residues 1286–1297 are compositionally biased toward acidic residues; it reads SDEDGSSDDEPE. Over residues 1298–1308 the composition is skewed to basic and acidic residues; sequence EGKKRTGKQNE. Serine 1322, serine 1324, and serine 1326 each carry phosphoserine. A compositionally biased stretch (basic residues) spans 1334-1345; sequence PRYRHRLLRHKL. 2 positions are modified to phosphoserine: serine 1348 and serine 1352. Basic and acidic residues-rich tracts occupy residues 1353–1368 and 1408–1417; these read GEEKKTKPKEHKEVKG and KKAELEENQR. The segment covering 1419-1428 has biased composition (basic residues); the sequence is YKQKKKRRRI. A compositionally biased stretch (acidic residues) spans 1443-1468; it reads EEEEEEKEEEEEEEEEEEEEEEDEND. Residue lysine 1488 forms a Glycyl lysine isopeptide (Lys-Gly) (interchain with G-Cter in SUMO2) linkage. Residue serine 1527 is modified to Phosphoserine. At threonine 1529 the chain carries Phosphothreonine. The 188-residue stretch at 1581–1768 folds into the Helicase ATP-binding domain; the sequence is KTKKSPGSGC…HCMVNFIKEN (188 aa). 1594 to 1601 contributes to the ATP binding site; the sequence is HCMGLGKT. A DEGH box motif is present at residues 1719 to 1722; sequence DEGH. 2 positions are modified to phosphoserine: serine 1906 and serine 1913. Residues 1913 to 2000 are disordered; that stretch reads SDSDETSMSL…SSNPSSPAPD (88 aa). A compositionally biased stretch (basic residues) spans 1929 to 1938; sequence KKKKKGKKGK. Residue lysine 1982 forms a Glycyl lysine isopeptide (Lys-Gly) (interchain with G-Cter in SUMO1); alternate linkage. A Glycyl lysine isopeptide (Lys-Gly) (interchain with G-Cter in SUMO2); alternate cross-link involves residue lysine 1982. Lysine 1987 is covalently cross-linked (Glycyl lysine isopeptide (Lys-Gly) (interchain with G-Cter in SUMO2)). A compositionally biased stretch (low complexity) spans 1990–1999; sequence SSSNPSSPAP. 2 positions are modified to phosphoserine: serine 1992 and serine 1996. Residues 2010 to 2280 form an interaction with MECP2 region; the sequence is DAEVLEHSGK…RKAAWAEYEA (271 aa). The Helicase C-terminal domain maps to 2025–2205; the sequence is EILRMAEEIG…ERHFTMNELT (181 aa). Serine 2220 is modified (phosphoserine). A disordered region spans residues 2462–2492; sequence PVAGGMQPPPLQRAPPPMRSKNPGPSQGKSM. Over residues 2468–2479 the composition is skewed to pro residues; sequence QPPPLQRAPPPM. Omega-N-methylarginine occurs at positions 2474 and 2480.

This sequence belongs to the SNF2/RAD54 helicase family. As to quaternary structure, interacts with DAXX to form the chromatin remodeling complex ATRX:DAXX. Probably binds EZH2. Binds annexin V in a calcium and phosphatidylcholine/phosphatidylserine-dependent manner. Interacts directly with CBX5 via the PxVxL motif. Interacts with RAD50, MRE11 and NBN; indicative for an association with the MRN complex. Interacts with histone MACROH2A1. Interacts with histone H3 peptides methylated at 'Lys-10' with preferences H3K9me3 &gt; H3K9me2 &gt; H3K9me1. Interacts with histone H3 peptides unmethylated at 'Lys-5' (H3K4me0). Interacts with MECP2, SMC1 and SMC3. Interacts with SETDB1, TRIM28 and ZNF274.

The protein localises to the nucleus. It localises to the chromosome. It is found in the telomere. The protein resides in the PML body. The enzyme catalyses ATP + H2O = ADP + phosphate + H(+). Its function is as follows. Involved in transcriptional regulation and chromatin remodeling. Facilitates DNA replication in multiple cellular environments and is required for efficient replication of a subset of genomic loci. Binds to DNA tandem repeat sequences in both telomeres and euchromatin and in vitro binds DNA quadruplex structures. May help stabilizing G-rich regions into regular chromatin structures by remodeling G4 DNA and incorporating H3.3-containing nucleosomes. Catalytic component of the chromatin remodeling complex ATRX:DAXX which has ATP-dependent DNA translocase activity and catalyzes the replication-independent deposition of histone H3.3 in pericentric DNA repeats outside S-phase and telomeres, and the in vitro remodeling of H3.3-containing nucleosomes. Its heterochromatin targeting is proposed to involve a combinatorial readout of histone H3 modifications (specifically methylation states of H3K9 and H3K4) and association with CBX5. Involved in maintaining telomere structural integrity in embryonic stem cells which probably implies recruitment of CBX5 to telomeres. May be involved in transcriptional regulation of telomeric repeat-containing RNA (TERRA). Acts as a negative regulator of chromatin incorporation of transcriptionally repressive histone MACROH2A1, particularily at telomeres. Participates in the allele-specific gene expression at the imprinted IGF2/H19 gene locus. On the maternal allele, required for the chromatin occupancy of SMC1 and CTCTF within the H19 imprinting control region (ICR) and involved in esatblishment of histone tails modifications in the ICR. May be involved in brain development and facial morphogenesis. Binds to zinc-finger coding genes with atypical chromatin signatures and regulates its H3K9me3 levels. Forms a complex with ZNF274, TRIM28 and SETDB1 to facilitate the deposition and maintenance of H3K9me3 at the 3' exons of zinc-finger genes. In Pongo pygmaeus (Bornean orangutan), this protein is Transcriptional regulator ATRX (ATRX).